The primary structure comprises 439 residues: Serine hydroxymethyltransferase (439 aa).

Residues L134 and G138–L140 contribute to the (6S)-5,6,7,8-tetrahydrofolate site. K243 is modified (N6-(pyridoxal phosphate)lysine).

This sequence belongs to the SHMT family. In terms of assembly, homodimer. Pyridoxal 5'-phosphate is required as a cofactor.

The protein localises to the cytoplasm. It carries out the reaction (6R)-5,10-methylene-5,6,7,8-tetrahydrofolate + glycine + H2O = (6S)-5,6,7,8-tetrahydrofolate + L-serine. The protein operates within one-carbon metabolism; tetrahydrofolate interconversion. Its pathway is amino-acid biosynthesis; glycine biosynthesis; glycine from L-serine: step 1/1. Catalyzes the reversible interconversion of serine and glycine with tetrahydrofolate (THF) serving as the one-carbon carrier. This reaction serves as the major source of one-carbon groups required for the biosynthesis of purines, thymidylate, methionine, and other important biomolecules. Also exhibits THF-independent aldolase activity toward beta-hydroxyamino acids, producing glycine and aldehydes, via a retro-aldol mechanism. In Brucella anthropi (strain ATCC 49188 / DSM 6882 / CCUG 24695 / JCM 21032 / LMG 3331 / NBRC 15819 / NCTC 12168 / Alc 37) (Ochrobactrum anthropi), this protein is Serine hydroxymethyltransferase.